We begin with the raw amino-acid sequence, 670 residues long: Sodium/potassium/calcium exchanger 2 (670 aa).

Residues 1–38 (MDLHQSATVRLLQEWCSHESPSGCRRHYNTRKKLKLIR) are Cytoplasmic-facing. Residues 39–59 (VIGLVMGLVAVSTVPFSISAF) form a helical membrane-spanning segment. Over 60–133 (TETYSQNNRG…DVFSLEERRK (74 aa)) the chain is Extracellular. Disordered regions lie at residues 67-86 (NRGE…HRQR) and 91-122 (LNDK…GDYP). Residues 106–122 (QEDRSENGTDHAQGDYP) are compositionally biased toward basic and acidic residues. A glycan (N-linked (GlcNAc...) asparagine) is linked at Asn-112. A helical membrane pass occupies residues 134–154 (GAIILHVIGMIYMFIALAIVC). Residues 155-179 (DEFFVPSLTVITEKLGISDDVAGAT) are Cytoplasmic-facing. The stretch at 175–215 (VAGATFMAAGGSAPELFTSLIGVFIAHSNVGIGTIVGSAVF) is one Alpha-1 repeat. A helical transmembrane segment spans residues 180-200 (FMAAGGSAPELFTSLIGVFIA). At 201-205 (HSNVG) the chain is on the extracellular side. Residues 206 to 226 (IGTIVGSAVFNILFVIGMCAL) form a helical membrane-spanning segment. Residues 227 to 244 (FSREILNLTWWPLFRDVS) lie on the Cytoplasmic side of the membrane. The helical transmembrane segment at 245 to 265 (FYIVDLIMLIIFFLDNVIMWW) threads the bilayer. Residue Glu-266 is a topological domain, extracellular. A helical transmembrane segment spans residues 267–287 (SLLLLTAYFAYVVFMKFNVQV). Residues 288–506 (ERWVKQMINR…PDVRKPASKK (219 aa)) lie on the Cytoplasmic side of the membrane. The interval 312–335 (ASTAGDKEEPTLPNKPRLQRGGSS) is disordered. Phosphoserine occurs at positions 337 and 341. Disordered stretches follow at residues 394-414 (KCQV…DYAA) and 450-471 (AADA…LSLS). A helical membrane pass occupies residues 507–527 (FFPITFFGSITWIAVFSYLMV). The Extracellular segment spans residues 528–542 (WWAHQVGETIGISEE). A helical membrane pass occupies residues 543–563 (IMGLTILAAGTSIPDLITSVI). The Alpha-2 repeat unit spans residues 550–581 (AAGTSIPDLITSVIVARKGLGDMAVSSSVGSN). Residues 564–578 (VARKGLGDMAVSSSV) lie on the Cytoplasmic side of the membrane. The helical transmembrane segment at 579–599 (GSNIFDITVGLPLPWLLYTII) threads the bilayer. Over 600–611 (HRFKPVTVSSNG) the chain is Extracellular. A helical membrane pass occupies residues 612 to 632 (LFCAIVLLFIMLIFVILSIAL). At 633 to 639 (CKWRMNK) the chain is on the cytoplasmic side. A helical membrane pass occupies residues 640–660 (ILGFIMFGLYFAFLVVSVLLE). Residues 661–670 (DKVLECPVSI) lie on the Extracellular side of the membrane.

It belongs to the Ca(2+):cation antiporter (CaCA) (TC 2.A.19) family. SLC24A subfamily. In terms of tissue distribution, expressed abundantly in all regions of the brain and weakly in the eye, large intestine and adrenal tissue.

The protein localises to the cell membrane. It carries out the reaction Ca(2+)(out) + K(+)(out) + 4 Na(+)(in) = Ca(2+)(in) + K(+)(in) + 4 Na(+)(out). Its function is as follows. Calcium, potassium:sodium antiporter that transports 1 Ca(2+) and 1 K(+) in exchange for 4 Na(+). Required for learming and memory by regulating neuronal Ca(2+), which is essential for the development of synaptic plasticity. The protein is Sodium/potassium/calcium exchanger 2 (Slc24a2) of Rattus norvegicus (Rat).